The chain runs to 76 residues: UPF0235 protein MMAR_2910 (76 aa).

Belongs to the UPF0235 family.

The chain is UPF0235 protein MMAR_2910 from Mycobacterium marinum (strain ATCC BAA-535 / M).